The following is a 145-amino-acid chain: SsrA-binding protein (145 aa).

It belongs to the SmpB family.

The protein localises to the cytoplasm. In terms of biological role, required for rescue of stalled ribosomes mediated by trans-translation. Binds to transfer-messenger RNA (tmRNA), required for stable association of tmRNA with ribosomes. tmRNA and SmpB together mimic tRNA shape, replacing the anticodon stem-loop with SmpB. tmRNA is encoded by the ssrA gene; the 2 termini fold to resemble tRNA(Ala) and it encodes a 'tag peptide', a short internal open reading frame. During trans-translation Ala-aminoacylated tmRNA acts like a tRNA, entering the A-site of stalled ribosomes, displacing the stalled mRNA. The ribosome then switches to translate the ORF on the tmRNA; the nascent peptide is terminated with the 'tag peptide' encoded by the tmRNA and targeted for degradation. The ribosome is freed to recommence translation, which seems to be the essential function of trans-translation. The chain is SsrA-binding protein from Mycoplasmopsis pulmonis (strain UAB CTIP) (Mycoplasma pulmonis).